The sequence spans 233 residues: 5'-methylthioadenosine/S-adenosylhomocysteine nucleosidase (233 aa).

Glu-12 acts as the Proton acceptor in catalysis. Residues Gly-78, Ile-152, and Met-173–Glu-174 contribute to the substrate site. Asp-197 serves as the catalytic Proton donor.

Belongs to the PNP/UDP phosphorylase family. MtnN subfamily. As to quaternary structure, homodimer.

It carries out the reaction S-adenosyl-L-homocysteine + H2O = S-(5-deoxy-D-ribos-5-yl)-L-homocysteine + adenine. The catalysed reaction is S-methyl-5'-thioadenosine + H2O = 5-(methylsulfanyl)-D-ribose + adenine. The enzyme catalyses 5'-deoxyadenosine + H2O = 5-deoxy-D-ribose + adenine. It functions in the pathway amino-acid biosynthesis; L-methionine biosynthesis via salvage pathway; S-methyl-5-thio-alpha-D-ribose 1-phosphate from S-methyl-5'-thioadenosine (hydrolase route): step 1/2. In terms of biological role, catalyzes the irreversible cleavage of the glycosidic bond in both 5'-methylthioadenosine (MTA) and S-adenosylhomocysteine (SAH/AdoHcy) to adenine and the corresponding thioribose, 5'-methylthioribose and S-ribosylhomocysteine, respectively. Also cleaves 5'-deoxyadenosine, a toxic by-product of radical S-adenosylmethionine (SAM) enzymes, into 5-deoxyribose and adenine. Thus, is required for in vivo function of the radical SAM enzymes biotin synthase and lipoic acid synthase, that are inhibited by 5'-deoxyadenosine accumulation. This is 5'-methylthioadenosine/S-adenosylhomocysteine nucleosidase from Yersinia pestis bv. Antiqua (strain Antiqua).